The sequence spans 295 residues: MPYQQITVNVNDAVAERLADALMEHGALSAAIEDACAGTQNEQAIFGEPGMPTEQIWQQSKVIALFGEHDEAAAVIDAAAQECGLKDLAYTGETIENQDWVRLTQSQFDPIRISDRLWITPSWHEAPEGCAVNLRLDPGLAFGTGSHPTTRLCLKWLDTQLKNGESVLDYGCGSGILTIAALKLGAGSAVGVDIDEQAVRSGRDNAEQNNVDAQFFLPDSLPQGQFDVVVANILANPLRMLGEMLAARTKQGGRIVLSGLLDEQAEELGGIYSQWFDLDPAETDEGWARLSGVKR.

Positions 150, 171, 193, and 232 each coordinate S-adenosyl-L-methionine.

This sequence belongs to the methyltransferase superfamily. PrmA family.

It is found in the cytoplasm. It carries out the reaction L-lysyl-[protein] + 3 S-adenosyl-L-methionine = N(6),N(6),N(6)-trimethyl-L-lysyl-[protein] + 3 S-adenosyl-L-homocysteine + 3 H(+). Its function is as follows. Methylates ribosomal protein L11. This Neisseria gonorrhoeae (strain ATCC 700825 / FA 1090) protein is Ribosomal protein L11 methyltransferase.